The primary structure comprises 88 residues: Small ribosomal subunit protein bS18 (88 aa).

The protein belongs to the bacterial ribosomal protein bS18 family. As to quaternary structure, part of the 30S ribosomal subunit. Forms a tight heterodimer with protein bS6.

Its function is as follows. Binds as a heterodimer with protein bS6 to the central domain of the 16S rRNA, where it helps stabilize the platform of the 30S subunit. The sequence is that of Small ribosomal subunit protein bS18 from Syntrophus aciditrophicus (strain SB).